The primary structure comprises 264 residues: S-adenosylmethionine decarboxylase proenzyme (264 aa).

Ser112 (schiff-base intermediate with substrate; via pyruvic acid) is an active-site residue. Ser112 is modified (pyruvic acid (Ser); by autocatalysis). Residue His117 is the Proton acceptor; for processing activity of the active site. The Proton donor; for catalytic activity role is filled by Cys140.

The protein belongs to the prokaryotic AdoMetDC family. Type 2 subfamily. As to quaternary structure, heterooctamer of four alpha and four beta chains arranged as a tetramer of alpha/beta heterodimers. Pyruvate is required as a cofactor. In terms of processing, is synthesized initially as an inactive proenzyme. Formation of the active enzyme involves a self-maturation process in which the active site pyruvoyl group is generated from an internal serine residue via an autocatalytic post-translational modification. Two non-identical subunits are generated from the proenzyme in this reaction, and the pyruvate is formed at the N-terminus of the alpha chain, which is derived from the carboxyl end of the proenzyme. The post-translation cleavage follows an unusual pathway, termed non-hydrolytic serinolysis, in which the side chain hydroxyl group of the serine supplies its oxygen atom to form the C-terminus of the beta chain, while the remainder of the serine residue undergoes an oxidative deamination to produce ammonia and the pyruvoyl group blocking the N-terminus of the alpha chain.

It catalyses the reaction S-adenosyl-L-methionine + H(+) = S-adenosyl 3-(methylsulfanyl)propylamine + CO2. Its pathway is amine and polyamine biosynthesis; S-adenosylmethioninamine biosynthesis; S-adenosylmethioninamine from S-adenosyl-L-methionine: step 1/1. Catalyzes the decarboxylation of S-adenosylmethionine to S-adenosylmethioninamine (dcAdoMet), the propylamine donor required for the synthesis of the polyamines spermine and spermidine from the diamine putrescine. The protein is S-adenosylmethionine decarboxylase proenzyme of Serratia proteamaculans (strain 568).